The chain runs to 468 residues: Glutamine synthetase (468 aa).

Residues 14-98 (HDVKYVDLRF…ILCDVYEPST (85 aa)) form the GS beta-grasp domain. A GS catalytic domain is found at 106–468 (PRGIAKAAEK…PIEYKMYYSV (363 aa)). 2 residues coordinate Mg(2+): E131 and E133. E209 provides a ligand contact to ATP. 2 residues coordinate Mg(2+): E214 and E221. Residues 265 to 266 (NG) and G266 each bind L-glutamate. H270 contacts Mg(2+). Residues 272 to 274 (HQS) and S274 each bind ATP. 3 residues coordinate L-glutamate: R322, E328, and R340. ATP contacts are provided by R340, R345, and K353. E358 provides a ligand contact to Mg(2+). R360 is a binding site for L-glutamate. O-AMP-tyrosine is present on Y398.

Belongs to the glutamine synthetase family. Oligomer of 12 subunits arranged in the form of two hexameric ring. It depends on Mg(2+) as a cofactor.

Its subcellular location is the cytoplasm. It carries out the reaction L-glutamate + NH4(+) + ATP = L-glutamine + ADP + phosphate + H(+). The activity of this enzyme could be controlled by adenylation under conditions of abundant glutamine. In terms of biological role, catalyzes the ATP-dependent biosynthesis of glutamine from glutamate and ammonia. The polypeptide is Glutamine synthetase (Azospirillum brasilense).